The following is a 189-amino-acid chain: Elongation factor P (189 aa).

The protein belongs to the elongation factor P family.

It is found in the cytoplasm. It functions in the pathway protein biosynthesis; polypeptide chain elongation. Involved in peptide bond synthesis. Stimulates efficient translation and peptide-bond synthesis on native or reconstituted 70S ribosomes in vitro. Probably functions indirectly by altering the affinity of the ribosome for aminoacyl-tRNA, thus increasing their reactivity as acceptors for peptidyl transferase. The chain is Elongation factor P from Ehrlichia canis (strain Jake).